A 183-amino-acid polypeptide reads, in one-letter code: MAETTMKININNFKRIDVMQGEKQVSSEDDVVFSTVLGSCIAACLYDPIAKIGGMNHFLLAEPSGSDHDPNSLKRYGVYAMEVLINAMLAKGAHRNRLRARLYGGATMRSGFGDIGIKNAEFARRFLQDEHILLNAEDIGGTTARRVDFCPALGLARCRHVENQRPVERLEVVPDKAGDVTFF.

This sequence belongs to the CheD family.

The catalysed reaction is L-glutaminyl-[protein] + H2O = L-glutamyl-[protein] + NH4(+). Probably deamidates glutamine residues to glutamate on methyl-accepting chemotaxis receptors (MCPs), playing an important role in chemotaxis. In Zymomonas mobilis subsp. mobilis (strain ATCC 31821 / ZM4 / CP4), this protein is Probable chemoreceptor glutamine deamidase CheD.